The chain runs to 78 residues: Disintegrin DisBa-01 (78 aa).

A Disintegrin domain is found at 1-78 (GNELLEAGEE…AGCPRNPFHA (78 aa)). 6 cysteine pairs are disulfide-bonded: Cys11–Cys26, Cys13–Cys21, Cys20–Cys43, Cys34–Cys40, Cys39–Cys64, and Cys52–Cys71. The Cell attachment site motif lies at 56–58 (RGD).

It belongs to the venom metalloproteinase (M12B) family. P-II subfamily. P-IIa sub-subfamily. In terms of assembly, monomer. In terms of tissue distribution, expressed by the venom gland.

It is found in the secreted. Functionally, this recombinant disintegrin antagonizes integrins alpha-IIb/beta-3 (ITGA2B/ITGB3) and alpha-V/beta-3 (ITGAV/ITGB3). On ITGA2B/ITGB3, it interferes with the outside/-in phosphorylation of the focal adhesion kinase (PTK2 / FAK) downstream of the integrin. It strongly inhibits platelet aggregation induced by ADP, thrombin, and collagen, abolishes and reverses dynamic platelet recruitment to immobilized fibrinogen. In vivo, it induces a dramatic increase in the tail bleeding time, and has a strong antithrombotic activity. On ITGAV/ITGB3, it inhibits the adhesion of ITGAV/ITGB3-expressing human microvascular endothelial cell line and murine melanoma cell line to vitronectin (IC(50) are 555 nM and 225 nM, respectively), and transiently inhibits their proliferation without direct cell toxicity. In vivo, it potently inhibits angiogenesis and metastasis, probably due to its capability to strongly inhibit the expression of VEGF and its receptors in endothelial cells. It also inhibits tumor cell migration in vitro. The chain is Disintegrin DisBa-01 from Bothrops alternatus (Urutu).